A 95-amino-acid polypeptide reads, in one-letter code: Aspartyl/glutamyl-tRNA(Asn/Gln) amidotransferase subunit C (95 aa).

This sequence belongs to the GatC family. Heterotrimer of A, B and C subunits.

The catalysed reaction is L-glutamyl-tRNA(Gln) + L-glutamine + ATP + H2O = L-glutaminyl-tRNA(Gln) + L-glutamate + ADP + phosphate + H(+). It catalyses the reaction L-aspartyl-tRNA(Asn) + L-glutamine + ATP + H2O = L-asparaginyl-tRNA(Asn) + L-glutamate + ADP + phosphate + 2 H(+). Allows the formation of correctly charged Asn-tRNA(Asn) or Gln-tRNA(Gln) through the transamidation of misacylated Asp-tRNA(Asn) or Glu-tRNA(Gln) in organisms which lack either or both of asparaginyl-tRNA or glutaminyl-tRNA synthetases. The reaction takes place in the presence of glutamine and ATP through an activated phospho-Asp-tRNA(Asn) or phospho-Glu-tRNA(Gln). The sequence is that of Aspartyl/glutamyl-tRNA(Asn/Gln) amidotransferase subunit C from Paracoccus denitrificans (strain Pd 1222).